The sequence spans 639 residues: Threonine--tRNA ligase (639 aa).

In terms of domain architecture, TGS spans 1 to 62; sequence MYQLTLPDKS…ETDANIEVLT (62 aa). Residues 246–537 are catalytic; the sequence is DHRKIGKELD…LIEHYEGKFP (292 aa). 3 residues coordinate Zn(2+): C337, H388, and H514.

Belongs to the class-II aminoacyl-tRNA synthetase family. As to quaternary structure, homodimer. Zn(2+) is required as a cofactor.

It is found in the cytoplasm. The enzyme catalyses tRNA(Thr) + L-threonine + ATP = L-threonyl-tRNA(Thr) + AMP + diphosphate + H(+). In terms of biological role, catalyzes the attachment of threonine to tRNA(Thr) in a two-step reaction: L-threonine is first activated by ATP to form Thr-AMP and then transferred to the acceptor end of tRNA(Thr). Also edits incorrectly charged L-seryl-tRNA(Thr). The sequence is that of Threonine--tRNA ligase from Leptospira borgpetersenii serovar Hardjo-bovis (strain JB197).